The following is a 321-amino-acid chain: Beta-ketoacyl-[acyl-carrier-protein] synthase III (321 aa).

Active-site residues include Cys113 and His248. An ACP-binding region spans residues 249–253 (QANAR). The active site involves Asn278.

It belongs to the thiolase-like superfamily. FabH family. In terms of assembly, homodimer.

The protein resides in the cytoplasm. The enzyme catalyses malonyl-[ACP] + acetyl-CoA + H(+) = 3-oxobutanoyl-[ACP] + CO2 + CoA. The protein operates within lipid metabolism; fatty acid biosynthesis. In terms of biological role, catalyzes the condensation reaction of fatty acid synthesis by the addition to an acyl acceptor of two carbons from malonyl-ACP. Catalyzes the first condensation reaction which initiates fatty acid synthesis and may therefore play a role in governing the total rate of fatty acid production. Possesses both acetoacetyl-ACP synthase and acetyl transacylase activities. Its substrate specificity determines the biosynthesis of branched-chain and/or straight-chain of fatty acids. The protein is Beta-ketoacyl-[acyl-carrier-protein] synthase III of Erythrobacter litoralis (strain HTCC2594).